The following is a 179-amino-acid chain: Large ribosomal subunit protein uL10 (179 aa).

It belongs to the universal ribosomal protein uL10 family. As to quaternary structure, part of the ribosomal stalk of the 50S ribosomal subunit. The N-terminus interacts with L11 and the large rRNA to form the base of the stalk. The C-terminus forms an elongated spine to which L12 dimers bind in a sequential fashion forming a multimeric L10(L12)X complex.

Its function is as follows. Forms part of the ribosomal stalk, playing a central role in the interaction of the ribosome with GTP-bound translation factors. This chain is Large ribosomal subunit protein uL10, found in Polynucleobacter necessarius subsp. necessarius (strain STIR1).